Consider the following 338-residue polypeptide: Large ribosomal subunit protein uL10 (338 aa).

Residues 297–338 (PSAQQTQTQQSTAEEKKEEKKEEEKKGPSEEEIGSGLASLFG) are disordered. Positions 298–308 (SAQQTQTQQST) are enriched in low complexity. Basic and acidic residues predominate over residues 309-325 (AEEKKEEKKEEEKKGPS).

Belongs to the universal ribosomal protein uL10 family. In terms of assembly, part of the 50S ribosomal subunit. Forms part of the ribosomal stalk which helps the ribosome interact with GTP-bound translation factors. Forms a heptameric L10(L12)2(L12)2(L12)2 complex, where L10 forms an elongated spine to which the L12 dimers bind in a sequential fashion.

In terms of biological role, forms part of the ribosomal stalk, playing a central role in the interaction of the ribosome with GTP-bound translation factors. In Saccharolobus islandicus (strain M.14.25 / Kamchatka #1) (Sulfolobus islandicus), this protein is Large ribosomal subunit protein uL10.